A 364-amino-acid chain; its full sequence is MIRAFDALSLPLLRLLDPEDAHRLAIQGLRLLPQAAPPADQPNLSVRAFGLNFSNPVGIAAGFDKNAEAPDALLRMGFGFVEIGTVTPKPQSGNPRPRLFRLERDEAVINRMGFNNDGGEVVLRRLAARSARGGIVGVNVGANKDSEDRVADYVRLIEMFAPVASYFTVNVSSPNTPGLRNLQQAAALDDLLAKVIEARERVRAIAGDTPVLLKIAPDLTLNELDDVVHIARSRKVDGMIVANTTLSRTHTLREQARAKEQGGLSGRPLFRLSTRMVAETYVRAEGAFPLIGVGGIDSGGAALTKIRAGASLIQLYSALIYKGLGLVESIKQDLASTLLRTGRDQLSEIVGADAPMITAEDWPV.

FMN contacts are provided by residues alanine 61–lysine 65 and threonine 85. Substrate is bound at residue lysine 65. Asparagine 110–phenylalanine 114 serves as a coordination point for substrate. FMN is bound by residues asparagine 139 and asparagine 170. Asparagine 170 is a substrate binding site. Serine 173 functions as the Nucleophile in the catalytic mechanism. Asparagine 175 contacts substrate. The FMN site is built by lysine 214 and alanine 242. Asparagine 243–threonine 244 contacts substrate. FMN is bound by residues glycine 266, glycine 295, and tyrosine 316–serine 317.

It belongs to the dihydroorotate dehydrogenase family. Type 2 subfamily. Monomer. It depends on FMN as a cofactor.

It is found in the cell membrane. It carries out the reaction (S)-dihydroorotate + a quinone = orotate + a quinol. It participates in pyrimidine metabolism; UMP biosynthesis via de novo pathway; orotate from (S)-dihydroorotate (quinone route): step 1/1. In terms of biological role, catalyzes the conversion of dihydroorotate to orotate with quinone as electron acceptor. The polypeptide is Dihydroorotate dehydrogenase (quinone) (Rhodopseudomonas palustris (strain BisA53)).